Consider the following 193-residue polypeptide: MHVGVLGGTFDPPHNGHLALALFARELLCVDRLILSVSDNPLKQRRSASDSQRKAMTELLCHEINRTGTFCDACGWELEQKRPSYTVNLLRFVRSLYPSARLSLLVGEDSWRNFGSWKSPEEIEELADVVVFARGAEHMTERPDAVSGIRFVEFSCPLSSTMLRGRIAEGQSVSSLLPSSIDRYIRREGLYGE.

Belongs to the NadD family.

The enzyme catalyses nicotinate beta-D-ribonucleotide + ATP + H(+) = deamido-NAD(+) + diphosphate. The protein operates within cofactor biosynthesis; NAD(+) biosynthesis; deamido-NAD(+) from nicotinate D-ribonucleotide: step 1/1. Its function is as follows. Catalyzes the reversible adenylation of nicotinate mononucleotide (NaMN) to nicotinic acid adenine dinucleotide (NaAD). The chain is Probable nicotinate-nucleotide adenylyltransferase from Chlorobium phaeovibrioides (strain DSM 265 / 1930) (Prosthecochloris vibrioformis (strain DSM 265)).